The following is a 90-amino-acid chain: Probable small nuclear ribonucleoprotein F (90 aa).

The Sm domain maps to 7-80; sequence NPRPFLQDLV…VLYIKKADEA (74 aa).

This sequence belongs to the snRNP Sm proteins family. SmF/LSm6 subfamily.

It is found in the nucleus. The protein localises to the cytoplasm. Plays a role in pre-mRNA splicing as a core component of the spliceosomal U1, U2, U4 and U5 small nuclear ribonucleoproteins (snRNPs), the building blocks of the spliceosome. This Neurospora crassa (strain ATCC 24698 / 74-OR23-1A / CBS 708.71 / DSM 1257 / FGSC 987) protein is Probable small nuclear ribonucleoprotein F.